A 350-amino-acid polypeptide reads, in one-letter code: 2-oxoglutarate-dependent ethylene/succinate-forming enzyme (350 aa).

The region spanning Gly166 to Pro286 is the Fe2OG dioxygenase domain. Residues His189 and His268 each contribute to the Fe cation site.

Belongs to the iron/ascorbate-dependent oxidoreductase family. As to quaternary structure, monomer. Fe(2+) is required as a cofactor.

It catalyses the reaction 2-oxoglutarate + O2 + 2 H(+) = ethene + 3 CO2 + H2O. The catalysed reaction is L-arginine + 2-oxoglutarate + O2 = guanidine + L-glutamate 5-semialdehyde + succinate + CO2. It functions in the pathway alkene biosynthesis; ethylene biosynthesis via 2-oxoglutarate. Its activity is regulated as follows. Activated by catalase. Inhibited by chelating reagents such as EDTA and Tiron (4,5-dihydroxy-1,3-benzene disulphonic acid), and by DTNB (5,5'-dithio-bis-2-nitrobenzoate) and hydrogen peroxide. Its function is as follows. Simultaneously catalyzes two reactions, namely formation of ethylene and of succinate from 2-oxoglutarate, with a molar ratio of 2:1. The chain is 2-oxoglutarate-dependent ethylene/succinate-forming enzyme (efe) from Pseudomonas savastanoi pv. phaseolicola (Pseudomonas syringae pv. phaseolicola).